We begin with the raw amino-acid sequence, 234 residues long: Adenosine 5'-phosphosulfate reductase (234 aa).

Positions 120, 121, 203, and 206 each coordinate [4Fe-4S] cluster. Cys229 serves as the catalytic Nucleophile; cysteine thiosulfonate intermediate.

It belongs to the PAPS reductase family. CysH subfamily. The cofactor is [4Fe-4S] cluster.

Its subcellular location is the cytoplasm. The enzyme catalyses [thioredoxin]-disulfide + sulfite + AMP + 2 H(+) = adenosine 5'-phosphosulfate + [thioredoxin]-dithiol. Its pathway is sulfur metabolism; hydrogen sulfide biosynthesis; sulfite from sulfate. Its function is as follows. Catalyzes the formation of sulfite from adenosine 5'-phosphosulfate (APS) using thioredoxin as an electron donor. The polypeptide is Adenosine 5'-phosphosulfate reductase (Bacillus cereus (strain AH187)).